A 481-amino-acid chain; its full sequence is Amino acid permease 6 (481 aa).

At 1 to 36 (MEKKKSMFVEQSFPEHEIGDTNKNFDEDGRDKRTGT) the chain is on the cytoplasmic side. 2 consecutive transmembrane segments (helical) span residues 37–57 (WMTGSAHIITAVIGSGVLSLA) and 58–78 (WAIAQLGWVAGPAVLMAFSFI). The Cytoplasmic portion of the chain corresponds to 79 to 125 (TYFTSTMLADCYRSPDPVTGKRNYTYMEVVRSYLGGRKVQLCGLAQY). Residues 126 to 146 (GNLIGITIGYTITASISMVAV) traverse the membrane as a helical segment. At 147-167 (KRSNCFHKNGHNVKCATSNTP) the chain is on the extracellular side. A helical membrane pass occupies residues 168–188 (FMIIFAIIQIILSQIPNFHNL). The Cytoplasmic segment spans residues 189 to 190 (SW). The helical transmembrane segment at 191–211 (LSILAAVMSFCYASIGVGLSI) threads the bilayer. At 212 to 242 (AKAAGGGEHVRTTLTGVTVGIDVSGAEKIWR) the chain is on the extracellular side. A helical transmembrane segment spans residues 243–263 (TFQAIGDIAFAYAYSTVLIEI). At 264-283 (QDTLKAGPPSENKAMKRASL) the chain is on the cytoplasmic side. A helical membrane pass occupies residues 284-304 (VGVSTTTFFYMLCGCVGYAAF). Residues 305 to 321 (GNDAPGNFLTGFGFYEP) are Extracellular-facing. The helical transmembrane segment at 322–342 (FWLIDFANVCIAVHLIGAYQV) threads the bilayer. Residues 343–385 (FCQPIFQFVESQSAKRWPDNKFITGEYKIHVPCCGDFSINFLR) are Cytoplasmic-facing. The chain crosses the membrane as a helical span at residues 386-405 (LVWRTSYVVVTAVVAMIFPF). The Extracellular portion of the chain corresponds to 406–408 (FND). Residues 409–427 (FLGLIGAASFWPLTVYFPI) traverse the membrane as a helical segment. Over 428-447 (EMHIAQKKIPKFSFTWTWLK) the chain is Cytoplasmic. A helical membrane pass occupies residues 448 to 468 (ILSWTCFIVSLVAAAGSVQGL). The Extracellular portion of the chain corresponds to 469–481 (IQSLKDFKPFQAP).

The protein belongs to the amino acid/polyamine transporter 2 family. Amino acid/auxin permease (AAAP) (TC 2.A.18.2) subfamily. In terms of tissue distribution, expressed in roots and leaves, and at lower levels in stems and flowers. Found in the xylem parenchyma.

Its subcellular location is the cell membrane. In terms of biological role, amino acid-proton symporter. Stereospecific transporter with a broad specificity for tryptophan, proline, and neutral and acidic amino acids. Has an affinity for aspartate in a physiological range. Involved in the uptake of amino acids diffusing out of the xylem tracheids into the xylem parenchyma. The sequence is that of Amino acid permease 6 (AAP6) from Arabidopsis thaliana (Mouse-ear cress).